The chain runs to 359 residues: MSLSRLIIHQFRNINSATLDFNPKINVVVGPNGSGKTALLEAIYFLGLGRSFRTHLTSRVVEHESKSFTLFSEIQNNNGSIPIGLQKSKSGETLLKINGSYCKKLANLTQYLPLQLITPEGYTLLSGSPKNRRAFLDWGVFYHDPIFYPNWSRIKRLLKQRNAALKQCKTYNELQIWDNELCILSEEISQQREAYFELLMPLVKQTLADFLPDFSITSQFFCGWDKNNKSLQDYLFDNFYRDKQIGYTSAGPQKADLRFKINGIPVSDVLSRGQLKLFVYALRLAQGLFLNSFDNKQCVFLIDDFSSELDQNKQQILAKHIINSNAQIFISVIAAENIDRLFGQEQTVFHVEHGKITVE.

Residue 30 to 37 participates in ATP binding; that stretch reads GPNGSGKT.

Belongs to the RecF family.

The protein localises to the cytoplasm. Its function is as follows. The RecF protein is involved in DNA metabolism; it is required for DNA replication and normal SOS inducibility. RecF binds preferentially to single-stranded, linear DNA. It also seems to bind ATP. This chain is DNA replication and repair protein RecF, found in Psychromonas ingrahamii (strain DSM 17664 / CCUG 51855 / 37).